We begin with the raw amino-acid sequence, 395 residues long: Immunoglobulin heavy constant gamma 2 (395 aa).

Residues 1-98 (ASTKGPSVFP…PSNTKVDKTV (98 aa)) are CH1. At 1–346 (ASTKGPSVFP…DGELDGLWTT (346 aa)) the chain is on the extracellular side. 3 consecutive Ig-like domains span residues 6–99 (PSVF…KTVE), 117–216 (PSVF…KTIS), and 225–321 (PQVY…KSLS). Cys-27 and Cys-83 form a disulfide bridge. The segment at 99–110 (ERKCCVECPPCP) is hinge. The CH2 stretch occupies residues 111–219 (APPVAGPSVF…PIEKTISKTK (109 aa)). 2 disulfides stabilise this stretch: Cys-140–Cys-200 and Cys-246–Cys-304. An N-linked (GlcNAc...) (complex) asparagine glycan is attached at Asn-176. The interval 220–326 (GQPREPQVYT…QKSLSLSPEL (107 aa)) is CH3. Residues 347–367 (ITIFITLFLLSVCYSATITFF) traverse the membrane as a helical segment. The Cytoplasmic portion of the chain corresponds to 368-395 (KVKWIFSSVVDLKQTIVPDYRNMIRQGA).

In terms of assembly, immunoglobulins are composed of two identical heavy chains and two identical light chains; disulfide-linked. Post-translationally, glycosylation on Asn-176 is required for interaction with Fc receptors and ability to activate the complement pathway. (Microbial infection) Deglycosylation on Asn-176 by S.pyogenes EndoS or Endos2 endoglucosidases prevents interaction between immunoglobulin-gamma (IgG) and Fc receptors, impairing ability to activate the complement pathway.

The protein resides in the secreted. It is found in the cell membrane. Its function is as follows. Constant region of immunoglobulin heavy chains. Immunoglobulins, also known as antibodies, are membrane-bound or secreted glycoproteins produced by B lymphocytes. In the recognition phase of humoral immunity, the membrane-bound immunoglobulins serve as receptors which, upon binding of a specific antigen, trigger the clonal expansion and differentiation of B lymphocytes into immunoglobulins-secreting plasma cells. Secreted immunoglobulins mediate the effector phase of humoral immunity, which results in the elimination of bound antigens. The antigen binding site is formed by the variable domain of one heavy chain, together with that of its associated light chain. Thus, each immunoglobulin has two antigen binding sites with remarkable affinity for a particular antigen. The variable domains are assembled by a process called V-(D)-J rearrangement and can then be subjected to somatic hypermutations which, after exposure to antigen and selection, allow affinity maturation for a particular antigen. The sequence is that of Immunoglobulin heavy constant gamma 2 from Homo sapiens (Human).